A 66-amino-acid chain; its full sequence is Large ribosomal subunit protein bL35 (66 aa).

It belongs to the bacterial ribosomal protein bL35 family.

The protein is Large ribosomal subunit protein bL35 of Moorella thermoacetica (strain ATCC 39073 / JCM 9320).